A 115-amino-acid polypeptide reads, in one-letter code: Iron-sulfur cluster insertion protein ErpA (115 aa).

3 residues coordinate iron-sulfur cluster: Cys42, Cys106, and Cys108.

This sequence belongs to the HesB/IscA family. Homodimer. Iron-sulfur cluster serves as cofactor.

Functionally, required for insertion of 4Fe-4S clusters for at least IspG. The polypeptide is Iron-sulfur cluster insertion protein ErpA (Baumannia cicadellinicola subsp. Homalodisca coagulata).